Consider the following 147-residue polypeptide: Large ribosomal subunit protein uL16c (147 aa).

Positions M1–M17 are enriched in basic residues. The tract at residues M1–I20 is disordered.

It belongs to the universal ribosomal protein uL16 family. In terms of assembly, part of the 50S ribosomal subunit.

It localises to the plastid. The protein resides in the chloroplast. The polypeptide is Large ribosomal subunit protein uL16c (Ipomoea purpurea (Common morning glory)).